A 153-amino-acid chain; its full sequence is Insulin-like growth factor 1 (153 aa).

Positions 49 to 77 are b; the sequence is GPETLCGAELVDALQFVCGDRGFYFNKPT. Disulfide bonds link cysteine 54/cysteine 96, cysteine 66/cysteine 109, and cysteine 95/cysteine 100. Residues 78 to 89 are c; that stretch reads GYGSSSRRAPQT. The interval 90–110 is a; sequence GIVDECCFRSCDLRRLEMYCA. The interval 111-118 is d; sequence PLKPAKSA. A propeptide spans 119 to 153 (e peptide); it reads RSVRAQRHTDMPKAQKEVHLKNASRGSAGNKNYRM. Residues 120–153 are disordered; that stretch reads SVRAQRHTDMPKAQKEVHLKNASRGSAGNKNYRM. The span at 125-138 shows a compositional bias: basic and acidic residues; that stretch reads RHTDMPKAQKEVHL. Over residues 142-153 the composition is skewed to polar residues; the sequence is SRGSAGNKNYRM.

The protein belongs to the insulin family. Forms a ternary complex with IGFR1 and ITGAV:ITGB3. Forms a ternary complex with IGFR1 and ITGA6:ITGB4. Forms a ternary complex with IGFBP3 and ALS.

The protein localises to the secreted. Functionally, the insulin-like growth factors, isolated from plasma, are structurally and functionally related to insulin but have a much higher growth-promoting activity. May be a physiological regulator of [1-14C]-2-deoxy-D-glucose (2DG) transport and glycogen synthesis in osteoblasts. Stimulates glucose transport in bone-derived osteoblastic (PyMS) cells and is effective at much lower concentrations than insulin, not only regarding glycogen and DNA synthesis but also with regard to enhancing glucose uptake. May play a role in synapse maturation. Ca(2+)-dependent exocytosis of IGF1 is required for sensory perception of smell in the olfactory bulb. Acts as a ligand for IGF1R. Binds to the alpha subunit of IGF1R, leading to the activation of the intrinsic tyrosine kinase activity which autophosphorylates tyrosine residues in the beta subunit thus initiating a cascade of down-stream signaling events leading to activation of the PI3K-AKT/PKB and the Ras-MAPK pathways. Binds to integrins ITGAV:ITGB3 and ITGA6:ITGB4. Its binding to integrins and subsequent ternary complex formation with integrins and IGFR1 are essential for IGF1 signaling. Induces the phosphorylation and activation of IGFR1, MAPK3/ERK1, MAPK1/ERK2 and AKT1. As part of the MAPK/ERK signaling pathway, acts as a negative regulator of apoptosis in cardiomyocytes via promotion of STUB1/CHIP-mediated ubiquitination and degradation of ICER-type isoforms of CREM. The polypeptide is Insulin-like growth factor 1 (Rhinopithecus roxellana (Golden snub-nosed monkey)).